The chain runs to 184 residues: Photosystem I assembly protein Ycf4 (184 aa).

Transmembrane regions (helical) follow at residues asparagine 21–tyrosine 43 and glycine 63–serine 85.

The protein belongs to the Ycf4 family.

The protein localises to the plastid. Its subcellular location is the chloroplast thylakoid membrane. Its function is as follows. Seems to be required for the assembly of the photosystem I complex. This is Photosystem I assembly protein Ycf4 from Spinacia oleracea (Spinach).